The primary structure comprises 399 residues: S-adenosylmethionine synthase (399 aa).

His16 lines the ATP pocket. Residue Asp18 participates in Mg(2+) binding. Glu44 is a K(+) binding site. Positions 57 and 100 each coordinate L-methionine. The flexible loop stretch occupies residues Gln100–Glu110. ATP is bound by residues Asp177 to Lys179, Arg244 to Phe245, Asp253, Arg259 to Lys260, Ala276, and Lys280. Residue Asp253 coordinates L-methionine. Lys284 provides a ligand contact to L-methionine.

This sequence belongs to the AdoMet synthase family. As to quaternary structure, homotetramer; dimer of dimers. It depends on Mg(2+) as a cofactor. Requires K(+) as cofactor.

Its subcellular location is the cytoplasm. It carries out the reaction L-methionine + ATP + H2O = S-adenosyl-L-methionine + phosphate + diphosphate. The protein operates within amino-acid biosynthesis; S-adenosyl-L-methionine biosynthesis; S-adenosyl-L-methionine from L-methionine: step 1/1. Functionally, catalyzes the formation of S-adenosylmethionine (AdoMet) from methionine and ATP. The overall synthetic reaction is composed of two sequential steps, AdoMet formation and the subsequent tripolyphosphate hydrolysis which occurs prior to release of AdoMet from the enzyme. In Lactococcus lactis subsp. cremoris (strain MG1363), this protein is S-adenosylmethionine synthase.